Reading from the N-terminus, the 130-residue chain is Phosphoribosyl-ATP pyrophosphatase (130 aa).

The protein belongs to the PRA-PH family.

The protein resides in the cytoplasm. The catalysed reaction is 1-(5-phospho-beta-D-ribosyl)-ATP + H2O = 1-(5-phospho-beta-D-ribosyl)-5'-AMP + diphosphate + H(+). Its pathway is amino-acid biosynthesis; L-histidine biosynthesis; L-histidine from 5-phospho-alpha-D-ribose 1-diphosphate: step 2/9. The polypeptide is Phosphoribosyl-ATP pyrophosphatase (Albidiferax ferrireducens (strain ATCC BAA-621 / DSM 15236 / T118) (Rhodoferax ferrireducens)).